The primary structure comprises 476 residues: Probable cytosolic Fe-S cluster assembly factor GF22738 (476 aa).

Residues Cys23, Cys68, Cys71, Cys74, Cys187, Cys243, Cys395, and Cys399 each coordinate [4Fe-4S] cluster.

This sequence belongs to the NARF family.

Component of the cytosolic iron-sulfur (Fe/S) protein assembly machinery. Required for maturation of extramitochondrial Fe/S proteins. This Drosophila ananassae (Fruit fly) protein is Probable cytosolic Fe-S cluster assembly factor GF22738.